Consider the following 106-residue polypeptide: UPF0145 protein VC_A0951 (106 aa).

The protein belongs to the UPF0145 family.

The chain is UPF0145 protein VC_A0951 from Vibrio cholerae serotype O1 (strain ATCC 39315 / El Tor Inaba N16961).